We begin with the raw amino-acid sequence, 180 residues long: Nucleoside triphosphate/diphosphate phosphatase (180 aa).

Residue arginine 26 is the Proton donor of the active site. Asparagine 90, aspartate 106, aspartate 108, aspartate 110, aspartate 123, and glutamate 126 together coordinate Mg(2+).

This sequence belongs to the Ntdp family. The cofactor is Mg(2+).

The enzyme catalyses a ribonucleoside 5'-triphosphate + H2O = a ribonucleoside 5'-diphosphate + phosphate + H(+). It carries out the reaction a ribonucleoside 5'-diphosphate + H2O = a ribonucleoside 5'-phosphate + phosphate + H(+). In terms of biological role, has nucleoside phosphatase activity towards nucleoside triphosphates and nucleoside diphosphates. This is Nucleoside triphosphate/diphosphate phosphatase from Staphylococcus aureus (strain MSSA476).